The chain runs to 189 residues: Crossover junction endodeoxyribonuclease RuvC (189 aa).

Active-site residues include aspartate 11, glutamate 71, and aspartate 143. The Mg(2+) site is built by aspartate 11, glutamate 71, and aspartate 143.

This sequence belongs to the RuvC family. Homodimer which binds Holliday junction (HJ) DNA. The HJ becomes 2-fold symmetrical on binding to RuvC with unstacked arms; it has a different conformation from HJ DNA in complex with RuvA. In the full resolvosome a probable DNA-RuvA(4)-RuvB(12)-RuvC(2) complex forms which resolves the HJ. The cofactor is Mg(2+).

It localises to the cytoplasm. The enzyme catalyses Endonucleolytic cleavage at a junction such as a reciprocal single-stranded crossover between two homologous DNA duplexes (Holliday junction).. Its function is as follows. The RuvA-RuvB-RuvC complex processes Holliday junction (HJ) DNA during genetic recombination and DNA repair. Endonuclease that resolves HJ intermediates. Cleaves cruciform DNA by making single-stranded nicks across the HJ at symmetrical positions within the homologous arms, yielding a 5'-phosphate and a 3'-hydroxyl group; requires a central core of homology in the junction. The consensus cleavage sequence is 5'-(A/T)TT(C/G)-3'. Cleavage occurs on the 3'-side of the TT dinucleotide at the point of strand exchange. HJ branch migration catalyzed by RuvA-RuvB allows RuvC to scan DNA until it finds its consensus sequence, where it cleaves and resolves the cruciform DNA. The polypeptide is Crossover junction endodeoxyribonuclease RuvC (Methylorubrum extorquens (strain CM4 / NCIMB 13688) (Methylobacterium extorquens)).